The following is a 395-amino-acid chain: Argininosuccinate synthase (395 aa).

ATP is bound by residues 9–17 (AYSGGLDTS) and alanine 37. Tyrosine 87 and serine 92 together coordinate L-citrulline. An ATP-binding site is contributed by glycine 117. Threonine 119, asparagine 123, and aspartate 124 together coordinate L-aspartate. Asparagine 123 contributes to the L-citrulline binding site. The L-citrulline site is built by arginine 127, serine 173, serine 182, glutamate 258, and tyrosine 270.

The protein belongs to the argininosuccinate synthase family. Type 1 subfamily. Homotetramer.

The protein localises to the cytoplasm. It catalyses the reaction L-citrulline + L-aspartate + ATP = 2-(N(omega)-L-arginino)succinate + AMP + diphosphate + H(+). The protein operates within amino-acid biosynthesis; L-arginine biosynthesis; L-arginine from L-ornithine and carbamoyl phosphate: step 2/3. This Methanospirillum hungatei JF-1 (strain ATCC 27890 / DSM 864 / NBRC 100397 / JF-1) protein is Argininosuccinate synthase.